We begin with the raw amino-acid sequence, 194 residues long: Holliday junction branch migration complex subunit RuvA (194 aa).

A domain I region spans residues 1–64 (MIGRLRGVLT…DDSAALYGFL (64 aa)). The segment at 65-140 (SESERRLFRH…RAADFNNGIS (76 aa)) is domain II. Positions 140 to 144 (STSGK) are flexible linker. Residues 145–194 (LNLDTVSEAALALQQLGYKPAEAARMARDAGTESDDVATVIKKALQAALC) are domain III.

It belongs to the RuvA family. As to quaternary structure, homotetramer. Forms an RuvA(8)-RuvB(12)-Holliday junction (HJ) complex. HJ DNA is sandwiched between 2 RuvA tetramers; dsDNA enters through RuvA and exits via RuvB. An RuvB hexamer assembles on each DNA strand where it exits the tetramer. Each RuvB hexamer is contacted by two RuvA subunits (via domain III) on 2 adjacent RuvB subunits; this complex drives branch migration. In the full resolvosome a probable DNA-RuvA(4)-RuvB(12)-RuvC(2) complex forms which resolves the HJ.

Its subcellular location is the cytoplasm. Functionally, the RuvA-RuvB-RuvC complex processes Holliday junction (HJ) DNA during genetic recombination and DNA repair, while the RuvA-RuvB complex plays an important role in the rescue of blocked DNA replication forks via replication fork reversal (RFR). RuvA specifically binds to HJ cruciform DNA, conferring on it an open structure. The RuvB hexamer acts as an ATP-dependent pump, pulling dsDNA into and through the RuvAB complex. HJ branch migration allows RuvC to scan DNA until it finds its consensus sequence, where it cleaves and resolves the cruciform DNA. The polypeptide is Holliday junction branch migration complex subunit RuvA (Xylella fastidiosa (strain M12)).